We begin with the raw amino-acid sequence, 154 residues long: Large ribosomal subunit protein uL22 (154 aa).

It belongs to the universal ribosomal protein uL22 family. In terms of assembly, part of the 50S ribosomal subunit.

This protein binds specifically to 23S rRNA. It makes multiple contacts with different domains of the 23S rRNA in the assembled 50S subunit and ribosome. Its function is as follows. The globular domain of the protein is located near the polypeptide exit tunnel on the outside of the subunit, while an extended beta-hairpin is found that lines the wall of the exit tunnel in the center of the 70S ribosome. The polypeptide is Large ribosomal subunit protein uL22 (Natronomonas pharaonis (strain ATCC 35678 / DSM 2160 / CIP 103997 / JCM 8858 / NBRC 14720 / NCIMB 2260 / Gabara) (Halobacterium pharaonis)).